A 345-amino-acid polypeptide reads, in one-letter code: Dihydroorotase (345 aa).

Residues His-13 and His-15 each contribute to the Zn(2+) site. Residues 15–17 (HLR) and Asn-41 each bind substrate. Lys-99, His-136, and His-174 together coordinate Zn(2+). Lys-99 is modified (N6-carboxylysine). His-136 contributes to the substrate binding site. Leu-219 lines the substrate pocket. Asp-247 provides a ligand contact to Zn(2+). Asp-247 is a catalytic residue. Residues His-251 and Ala-263 each coordinate substrate.

The protein belongs to the metallo-dependent hydrolases superfamily. DHOase family. Class II DHOase subfamily. In terms of assembly, homodimer. It depends on Zn(2+) as a cofactor.

The enzyme catalyses (S)-dihydroorotate + H2O = N-carbamoyl-L-aspartate + H(+). Its pathway is pyrimidine metabolism; UMP biosynthesis via de novo pathway; (S)-dihydroorotate from bicarbonate: step 3/3. In terms of biological role, catalyzes the reversible cyclization of carbamoyl aspartate to dihydroorotate. The chain is Dihydroorotase from Agrobacterium fabrum (strain C58 / ATCC 33970) (Agrobacterium tumefaciens (strain C58)).